Consider the following 212-residue polypeptide: Endonuclease III (212 aa).

Residues 108–127 enclose the HhH domain; the sequence is FKELVKLPGVGRKTANVVLN. Cysteine 187, cysteine 194, cysteine 197, and cysteine 203 together coordinate [4Fe-4S] cluster.

Belongs to the Nth/MutY family. Requires [4Fe-4S] cluster as cofactor.

It catalyses the reaction 2'-deoxyribonucleotide-(2'-deoxyribose 5'-phosphate)-2'-deoxyribonucleotide-DNA = a 3'-end 2'-deoxyribonucleotide-(2,3-dehydro-2,3-deoxyribose 5'-phosphate)-DNA + a 5'-end 5'-phospho-2'-deoxyribonucleoside-DNA + H(+). DNA repair enzyme that has both DNA N-glycosylase activity and AP-lyase activity. The DNA N-glycosylase activity releases various damaged pyrimidines from DNA by cleaving the N-glycosidic bond, leaving an AP (apurinic/apyrimidinic) site. The AP-lyase activity cleaves the phosphodiester bond 3' to the AP site by a beta-elimination, leaving a 3'-terminal unsaturated sugar and a product with a terminal 5'-phosphate. In Rickettsia prowazekii (strain Madrid E), this protein is Endonuclease III.